A 612-amino-acid polypeptide reads, in one-letter code: Sulfite reductase [NADPH] hemoprotein beta-component (612 aa).

The disordered stretch occupies residues 1–26 (MDDHKPIETPDGPAVDTPGIGARRYE). The [4Fe-4S] cluster site is built by cysteine 469, cysteine 475, cysteine 514, and cysteine 518. Cysteine 518 contributes to the siroheme binding site.

Belongs to the nitrite and sulfite reductase 4Fe-4S domain family. Alpha(8)-beta(8). The alpha component is a flavoprotein, the beta component is a hemoprotein. The cofactor is siroheme. Requires [4Fe-4S] cluster as cofactor.

The enzyme catalyses hydrogen sulfide + 3 NADP(+) + 3 H2O = sulfite + 3 NADPH + 4 H(+). It participates in sulfur metabolism; hydrogen sulfide biosynthesis; hydrogen sulfide from sulfite (NADPH route): step 1/1. Component of the sulfite reductase complex that catalyzes the 6-electron reduction of sulfite to sulfide. This is one of several activities required for the biosynthesis of L-cysteine from sulfate. The polypeptide is Sulfite reductase [NADPH] hemoprotein beta-component (Methylorubrum extorquens (strain CM4 / NCIMB 13688) (Methylobacterium extorquens)).